Consider the following 339-residue polypeptide: Ferredoxin--NADP reductase (339 aa).

7 residues coordinate FAD: aspartate 32, glutamine 40, tyrosine 45, valine 85, phenylalanine 120, aspartate 287, and threonine 327.

It belongs to the ferredoxin--NADP reductase type 2 family. In terms of assembly, homodimer. It depends on FAD as a cofactor.

It carries out the reaction 2 reduced [2Fe-2S]-[ferredoxin] + NADP(+) + H(+) = 2 oxidized [2Fe-2S]-[ferredoxin] + NADPH. The sequence is that of Ferredoxin--NADP reductase from Wolbachia sp. subsp. Brugia malayi (strain TRS).